The primary structure comprises 157 residues: Large ribosomal subunit protein uL22 (157 aa).

This sequence belongs to the universal ribosomal protein uL22 family. As to quaternary structure, part of the 50S ribosomal subunit.

In terms of biological role, this protein binds specifically to 23S rRNA. It makes multiple contacts with different domains of the 23S rRNA in the assembled 50S subunit and ribosome. Its function is as follows. The globular domain of the protein is located near the polypeptide exit tunnel on the outside of the subunit, while an extended beta-hairpin is found that lines the wall of the exit tunnel in the center of the 70S ribosome. The polypeptide is Large ribosomal subunit protein uL22 (Staphylothermus marinus (strain ATCC 43588 / DSM 3639 / JCM 9404 / F1)).